A 595-amino-acid polypeptide reads, in one-letter code: Parathyroid hormone/parathyroid hormone-related peptide receptor (595 aa).

Positions 1–28 (MGAVRIAPGLALLLCCPVLSSAYALVDA) are cleaved as a signal peptide. Residues 29-188 (DDVMTKEEQI…REREVFDRLG (160 aa)) are Extracellular-facing. 3 disulfides stabilise this stretch: Cys-48-Cys-117, Cys-108-Cys-148, and Cys-131-Cys-170. Residues 66–103 (DKGWASASTSGKPKKEKASGKLYPESEEDKEVPTGSRH) are disordered. Asn-151, Asn-161, Asn-166, and Asn-176 each carry an N-linked (GlcNAc...) asparagine glycan. The chain crosses the membrane as a helical span at residues 189–209 (MIYTVGYSVSLASLTVAVLIL). The Cytoplasmic segment spans residues 210–223 (AYFRRLHCTRNYIH). Residues 224-244 (MHLFLSFMLRAVSIFVKDAVL) form a helical membrane-spanning segment. Residues 245 to 294 (YSGATLDEAERLTEEELRAIAQAPPPPTAAAGYAGCRVAVTFFLYFLATN) are Extracellular-facing. A helical transmembrane segment spans residues 295 to 315 (YYWILVEGLYLHSLIFMAFFS). The Cytoplasmic segment spans residues 316–318 (EKK). The helical transmembrane segment at 319–339 (YLWGFTVFGWGLPAVFVAVWV) threads the bilayer. Residues 340 to 360 (SVRATLANTGCWDLSSGNKKW) are Extracellular-facing. A helical transmembrane segment spans residues 361-381 (IIQVPILASIVLNFILFINIV). The Cytoplasmic portion of the chain corresponds to 382 to 404 (RVLATKLRETNAGRCDTRQQYRK). A helical membrane pass occupies residues 405-425 (LLKSTLVLMPLFGVHYIVFMA). Residues 426–439 (TPYTEVSGTLWQVQ) lie on the Extracellular side of the membrane. The chain crosses the membrane as a helical span at residues 440–460 (MHYEMLFNSFQGFFVAIIYCF). At 461 to 595 (CNGEVQAEIK…LLQEEWETVM (135 aa)) the chain is on the cytoplasmic side. The short motif at 473-476 (WSRW) is the Important for interaction with G proteins element. A disordered region spans residues 528–595 (TTTATTNGHP…LLQEEWETVM (68 aa)). The segment covering 547 to 559 (APTLPATPPATAA) has biased composition (low complexity). Residue Thr-553 is modified to Phosphothreonine.

It belongs to the G-protein coupled receptor 2 family. In terms of assembly, homodimer in the absence of bound ligand. Peptide hormone binding leads to dissociation of the homodimer. In terms of processing, N-glycosylated. High levels in the kidney, with much lower levels in aorta, heart, lung, prostate, testis, and skeletal muscle.

The protein localises to the cell membrane. Functionally, G-protein-coupled receptor for parathyroid hormone (PTH) and for parathyroid hormone-related peptide (PTHLH). Ligand binding causes a conformation change that triggers signaling via guanine nucleotide-binding proteins (G proteins) and modulates the activity of downstream effectors, such as adenylate cyclase (cAMP). PTH1R is coupled to G(s) G alpha proteins and mediates activation of adenylate cyclase activity. PTHLH dissociates from PTH1R more rapidly than PTH; as consequence, the cAMP response induced by PTHLH decays faster than the response induced by PTH. This is Parathyroid hormone/parathyroid hormone-related peptide receptor (PTH1R) from Canis lupus familiaris (Dog).